The sequence spans 155 residues: Small ribosomal subunit protein uS7cz/uS7cy (155 aa).

It belongs to the universal ribosomal protein uS7 family. In terms of assembly, part of the 30S ribosomal subunit.

The protein resides in the plastid. It localises to the chloroplast. One of the primary rRNA binding proteins, it binds directly to 16S rRNA where it nucleates assembly of the head domain of the 30S subunit. The chain is Small ribosomal subunit protein uS7cz/uS7cy (rps7-A) from Lactuca sativa (Garden lettuce).